The following is an 809-amino-acid chain: Carbon monoxide dehydrogenase large chain (809 aa).

Cys-388 is a binding site for Cu(+). Glu-763 provides a ligand contact to Mo-molybdopterin cytosine dinucleotide.

As to quaternary structure, dimer of heterotrimers. Each heterotrimer consists of a large, a medium and a small subunit. The cofactor is Cu(+). Requires Mo-molybdopterin cytosine dinucleotide as cofactor.

The enzyme catalyses CO + a quinone + H2O = a quinol + CO2. In terms of biological role, catalyzes the oxidation of carbon monoxide to carbon dioxide. This Afipia carboxidovorans (strain ATCC 49405 / DSM 1227 / KCTC 32145 / OM5) (Oligotropha carboxidovorans) protein is Carbon monoxide dehydrogenase large chain (coxL).